Reading from the N-terminus, the 633-residue chain is DNA mismatch repair protein MutL (633 aa).

2 disordered regions span residues 336-364 (VRPD…GEFG) and 384-405 (GWSG…TRPE). Low complexity predominate over residues 388–401 (GASSSGASSGYSAY).

This sequence belongs to the DNA mismatch repair MutL/HexB family.

Functionally, this protein is involved in the repair of mismatches in DNA. It is required for dam-dependent methyl-directed DNA mismatch repair. May act as a 'molecular matchmaker', a protein that promotes the formation of a stable complex between two or more DNA-binding proteins in an ATP-dependent manner without itself being part of a final effector complex. This chain is DNA mismatch repair protein MutL, found in Pseudomonas paraeruginosa (strain DSM 24068 / PA7) (Pseudomonas aeruginosa (strain PA7)).